Here is a 779-residue protein sequence, read N- to C-terminus: Acyl-CoA dehydrogenase family member 11 (779 aa).

Lys175 carries the N6-acetyllysine modification. Residue Ser210 is modified to Phosphoserine. Residue Tyr323 is modified to Phosphotyrosine. N6-succinyllysine is present on residues Lys368 and Lys390. Residues 503–513 (FCMTEPNVSSS), 511–513 (SSS), 537–539 (WSS), and Ser539 contribute to the FAD site. Ser513 contacts substrate. 628-631 (GPGR) contacts substrate. FAD-binding positions include Arg656, Gln726, and 726–730 (QVHGG). Residue Gly754 coordinates substrate. Residues 755-757 (PDE) and Glu757 each bind FAD. The residue at position 765 (Lys765) is an N6-acetyllysine.

It belongs to the acyl-CoA dehydrogenase family. As to quaternary structure, homodimer. It depends on FAD as a cofactor.

Its subcellular location is the peroxisome. It is found in the mitochondrion membrane. The enzyme catalyses a 2,3-saturated acyl-CoA + oxidized [electron-transfer flavoprotein] + H(+) = a (2E)-enoyl-CoA + reduced [electron-transfer flavoprotein]. It catalyses the reaction docosanoyl-CoA + oxidized [electron-transfer flavoprotein] + H(+) = (2E)-docosenoyl-CoA + reduced [electron-transfer flavoprotein]. The catalysed reaction is tetracosanoyl-CoA + oxidized [electron-transfer flavoprotein] + H(+) = (2E)-tetracosenoyl-CoA + reduced [electron-transfer flavoprotein]. It carries out the reaction eicosanoyl-CoA + oxidized [electron-transfer flavoprotein] + H(+) = (2E)-eicosenoyl-CoA + reduced [electron-transfer flavoprotein]. The enzyme catalyses hexacosanoyl-CoA + oxidized [electron-transfer flavoprotein] + H(+) = (2E)-hexacosenoyl-CoA + reduced [electron-transfer flavoprotein]. It catalyses the reaction tricosanoyl-CoA + oxidized [electron-transfer flavoprotein] + H(+) = (2E)-tricosenoyl-CoA + reduced [electron-transfer flavoprotein]. It participates in lipid metabolism; fatty acid beta-oxidation. Acyl-CoA dehydrogenase, that exhibits maximal activity towards saturated C22-CoA. Probably participates in beta-oxydation and energy production but could also play a role in the metabolism of specific fatty acids to control fatty acids composition of cellular lipids in brain. This Rattus norvegicus (Rat) protein is Acyl-CoA dehydrogenase family member 11 (Acad11).